A 162-amino-acid polypeptide reads, in one-letter code: Transcriptional repressor NrdR (162 aa).

A zinc finger spans residues 3–34; it reads CPYCHHTDSRVLESRSAEGGQSIRRRRECLAC. An ATP-cone domain is found at 49 to 139; the sequence is ITVIKRNGDR…VYRQFQGISD (91 aa).

Belongs to the NrdR family. Zn(2+) serves as cofactor.

Functionally, negatively regulates transcription of bacterial ribonucleotide reductase nrd genes and operons by binding to NrdR-boxes. This Thermosynechococcus vestitus (strain NIES-2133 / IAM M-273 / BP-1) protein is Transcriptional repressor NrdR.